We begin with the raw amino-acid sequence, 239 residues long: 2-C-methyl-D-erythritol 4-phosphate cytidylyltransferase (239 aa).

This sequence belongs to the IspD/TarI cytidylyltransferase family. IspD subfamily. In terms of assembly, homodimer.

The catalysed reaction is 2-C-methyl-D-erythritol 4-phosphate + CTP + H(+) = 4-CDP-2-C-methyl-D-erythritol + diphosphate. Its pathway is isoprenoid biosynthesis; isopentenyl diphosphate biosynthesis via DXP pathway; isopentenyl diphosphate from 1-deoxy-D-xylulose 5-phosphate: step 2/6. Functionally, catalyzes the formation of 4-diphosphocytidyl-2-C-methyl-D-erythritol from CTP and 2-C-methyl-D-erythritol 4-phosphate (MEP). In Sodalis glossinidius (strain morsitans), this protein is 2-C-methyl-D-erythritol 4-phosphate cytidylyltransferase.